Here is a 186-residue protein sequence, read N- to C-terminus: Ribosome-recycling factor (186 aa).

The protein belongs to the RRF family.

The protein resides in the cytoplasm. Its function is as follows. Responsible for the release of ribosomes from messenger RNA at the termination of protein biosynthesis. May increase the efficiency of translation by recycling ribosomes from one round of translation to another. In Methylocella silvestris (strain DSM 15510 / CIP 108128 / LMG 27833 / NCIMB 13906 / BL2), this protein is Ribosome-recycling factor.